A 502-amino-acid polypeptide reads, in one-letter code: Cytochrome P450 monooxygenase prhN (502 aa).

Residues 14 to 30 form a helical membrane-spanning segment; that stretch reads SGALLIVGILLLRWALW. N165 carries an N-linked (GlcNAc...) asparagine glycan. Position 443 (C443) interacts with heme. Residue N474 is glycosylated (N-linked (GlcNAc...) asparagine).

It belongs to the cytochrome P450 family. It depends on heme as a cofactor.

It is found in the membrane. It functions in the pathway secondary metabolite biosynthesis; terpenoid biosynthesis. In terms of biological role, cytochrome P450 monooxygenase; part of the gene cluster that mediates the biosynthesis of paraherquonin, a meroterpenoid with a unique, highly congested hexacyclic molecular architecture. The first step of the pathway is the synthesis of 3,5-dimethylorsellinic acid (DMOA) by the polyketide synthase prhL. Synthesis of DMOA is followed by farnesylation by the prenyltransferase prhE, methylesterification by the methyl-transferase prhM, epoxidation of the prenyl chain by the flavin-dependent monooxygenase prhF, and cyclization of the farnesyl moiety by the terpene cyclase prhH, to yield the tetracyclic intermediate, protoaustinoid A. The short chain dehydrogenase prhI then oxidizes the C-3 alcohol group of the terpene cyclase product to transform protoaustinoid A into protoaustinoid B. The FAD-binding monooxygenase prhJ catalyzes the oxidation of protoaustinoid B into preaustinoid A which is further oxidized into preaustinoid A1 by FAD-binding monooxygenase phrK. Finally, prhA leads to berkeleydione via the berkeleyone B intermediate. PrhA is a multifunctional dioxygenase that first desaturates at C5-C6 to form berkeleyone B, followed by rearrangement of the A/B-ring to form the cycloheptadiene moiety in berkeleydione. Berkeleydione serves as the key intermediate for the biosynthesis of paraherquonin as well as many other meroterpenoids. The cytochrome P450 monooxygenases prhB, prhD, and prhN, as well as the isomerase prhC, are probably involved in the late stage of paraherquonin biosynthesis, after the production of berkeleydione. Especially prhC might be a multifunctional enzyme that catalyzes the D-ring expansion via intramolecular methoxy rearrangement, as well as the hydrolysis of the expanded D-ring. The chain is Cytochrome P450 monooxygenase prhN from Penicillium brasilianum.